We begin with the raw amino-acid sequence, 463 residues long: Probable diacyglycerol O-acyltransferase tgs1 (463 aa).

Residue M1 is modified to N-acetylmethionine. H137 functions as the Proton acceptor in the catalytic mechanism.

This sequence belongs to the long-chain O-acyltransferase family.

It carries out the reaction an acyl-CoA + a 1,2-diacyl-sn-glycerol = a triacyl-sn-glycerol + CoA. It catalyses the reaction di-(9Z)-octadecenoylglycerol + (9Z)-octadecenoyl-CoA = 1,2,3-tri-(9Z-octadecenoyl)-glycerol + CoA. It participates in glycerolipid metabolism; triacylglycerol biosynthesis. In terms of biological role, catalyzes the terminal and only committed step in triacylglycerol synthesis by using diacylglycerol and fatty acyl CoA as substrates. Required for storage lipid synthesis. Upon expression in E.coli functions as a triacylglycerol synthase, making triacylglycerol (TG) from diolein and long-chain fatty acyl-CoA. Prefers C(26:0)-CoA over C(18:1)-CoA. TG synthesis activity increases in M.tuberculosis upon oxygen depletion and NO treatment, with concomitant accumulation of TG in inclusion bodies. As disruption of the gene encoding this protein obviates TG synthesis this seems to be the major enzyme involved in production of TG. Has no wax synthase activity to produce wax esters. In Mycobacterium tuberculosis (strain ATCC 25618 / H37Rv), this protein is Probable diacyglycerol O-acyltransferase tgs1 (tgs1).